The chain runs to 643 residues: Nicastrin (643 aa).

Positions 1 to 20 (MRFKNVLVLLLLLVFSVINS) are cleaved as a signal peptide. Residues 21 to 611 (EPSAPATISD…VFKIGNSTTE (591 aa)) lie on the Extracellular side of the membrane. A disulfide bridge connects residues C42 and C54. N96 and N166 each carry an N-linked (GlcNAc...) asparagine glycan. Intrachain disulfides connect C204–C210 and C308–C318. 2 N-linked (GlcNAc...) asparagine glycosylation sites follow: N333 and N385. 3 disulfides stabilise this stretch: C479–C486, C540–C551, and C546–C556. N584 carries N-linked (GlcNAc...) asparagine glycosylation. Residues 612-632 (IWFLVSGLIELLVSIGLILYV) traverse the membrane as a helical segment. Residues 633–643 (KKFLSNRYKLL) are Cytoplasmic-facing.

Belongs to the nicastrin family. In terms of assembly, component of the gamma-secretase complex, a complex composed of a presenilin homodimer, nicastrin, aph1 and pen2.

It localises to the membrane. Essential subunit of the gamma-secretase complex, an endoprotease complex that catalyzes the intramembrane cleavage of integral membrane proteins such as Notch receptors and APP (amyloid-beta precursor protein). This is Nicastrin from Dictyostelium purpureum (Slime mold).